A 297-amino-acid chain; its full sequence is tRNA pseudouridine synthase B (297 aa).

The active-site Nucleophile is the aspartate 44.

Belongs to the pseudouridine synthase TruB family. Type 1 subfamily.

The enzyme catalyses uridine(55) in tRNA = pseudouridine(55) in tRNA. Responsible for synthesis of pseudouridine from uracil-55 in the psi GC loop of transfer RNAs. This Corynebacterium glutamicum (strain ATCC 13032 / DSM 20300 / JCM 1318 / BCRC 11384 / CCUG 27702 / LMG 3730 / NBRC 12168 / NCIMB 10025 / NRRL B-2784 / 534) protein is tRNA pseudouridine synthase B.